We begin with the raw amino-acid sequence, 199 residues long: NAD(P)H dehydrogenase (quinone) (199 aa).

The 187-residue stretch at 4–190 (MLVLYYSAYG…DGARFQGRRV (187 aa)) folds into the Flavodoxin-like domain. Residues 10–15 (SAYGYM) and 78–80 (TRY) contribute to the FMN site. Residue Y12 coordinates NAD(+). W98 is a binding site for substrate. Residues 113–119 (STATQHG) and H134 contribute to the FMN site. The segment at 157 to 181 (GGAPYGMTTTADGDGSRQPSAQELD) is disordered. Polar residues predominate over residues 163 to 177 (MTTTADGDGSRQPSA).

It belongs to the WrbA family. The cofactor is FMN.

It carries out the reaction a quinone + NADH + H(+) = a quinol + NAD(+). The enzyme catalyses a quinone + NADPH + H(+) = a quinol + NADP(+). The polypeptide is NAD(P)H dehydrogenase (quinone) (Brucella melitensis biotype 2 (strain ATCC 23457)).